The following is a 232-amino-acid chain: Lipoprotein-releasing system ATP-binding protein LolD (232 aa).

An ABC transporter domain is found at 11 to 231 (VYLHDIKRQY…SIEDGVIVEL (221 aa)). Residue 47–54 (APSGSGKS) participates in ATP binding.

The protein belongs to the ABC transporter superfamily. Lipoprotein translocase (TC 3.A.1.125) family. As to quaternary structure, the complex is composed of two ATP-binding proteins (LolD) and two transmembrane proteins (LolC and LolE).

The protein resides in the cell inner membrane. Functionally, part of the ABC transporter complex LolCDE involved in the translocation of mature outer membrane-directed lipoproteins, from the inner membrane to the periplasmic chaperone, LolA. Responsible for the formation of the LolA-lipoprotein complex in an ATP-dependent manner. This chain is Lipoprotein-releasing system ATP-binding protein LolD, found in Rhodopseudomonas palustris (strain BisB5).